We begin with the raw amino-acid sequence, 312 residues long: Tyrosine recombinase XerC (312 aa).

The 103-residue stretch at 1–103 folds into the Core-binding (CB) domain; that stretch reads MISAFYAFLD…AIKSFSQYCI (103 aa). One can recognise a Tyr recombinase domain in the interval 124-306; that stretch reads ELPSPITYEQ…SMKLKKQTHE (183 aa). Residues R164, K188, H258, R261, and H284 contribute to the active site. The active-site O-(3'-phospho-DNA)-tyrosine intermediate is the Y293.

It belongs to the 'phage' integrase family. XerC subfamily. In terms of assembly, forms a cyclic heterotetrameric complex composed of two molecules of XerC and two molecules of XerD.

The protein resides in the cytoplasm. Functionally, site-specific tyrosine recombinase, which acts by catalyzing the cutting and rejoining of the recombining DNA molecules. The XerC-XerD complex is essential to convert dimers of the bacterial chromosome into monomers to permit their segregation at cell division. It also contributes to the segregational stability of plasmids. The chain is Tyrosine recombinase XerC from Chlamydia caviae (strain ATCC VR-813 / DSM 19441 / 03DC25 / GPIC) (Chlamydophila caviae).